Here is an 893-residue protein sequence, read N- to C-terminus: Major vault protein (893 aa).

Ala2 is subject to N-acetylalanine. MVP repeat units lie at residues 2–56 (ATEE…VPPR), 57–111 (HYCT…DITP), 112–164 (LQVV…EIIQ), 165–217 (ATII…DLVD), 218–272 (AVIL…GVVP), 273–323 (ITTL…IQDV), 324–379 (YVLS…ERQA), 380–457 (IPLD…KTRV), and 458–520 (VSYR…LLGP). Lys444 is covalently cross-linked (Glycyl lysine isopeptide (Lys-Gly) (interchain with G-Cter in SUMO2)). At Ser445 the chain carries Phosphoserine. Lys704 is covalently cross-linked (Glycyl lysine isopeptide (Lys-Gly) (interchain with G-Cter in SUMO2)). Residues 856-893 (QPLGRRVASGPSPGEGISPQSAQAPQAPGDNHVVPVLR) are disordered.

The vault ribonucleoprotein particle is a huge (400 A x 670 A) cage structure of 12.9 MDa. It consists of a dimer of half-vaults, with each half-vault comprising 39 identical major vault protein (MVP) chains, PARP4 and one or more vault RNAs (vRNAs). Interacts with TEP1. Interacts with PTEN and activated MAPK1. The phosphorylated protein interacts with the SH2 domains of PTPN11 and SRC. Interacts with APEX1. May interact with ZNF540. Phosphorylated on Tyr residues after EGF stimulation. In terms of processing, dephosphorylated by PTPN11. As to expression, present in most normal tissues. Higher expression observed in epithelial cells with secretory and excretory functions, as well as in cells chronically exposed to xenobiotics, such as bronchial cells and cells lining the intestine. Overexpressed in many multidrug-resistant cancer cells.

It localises to the cytoplasm. Its subcellular location is the nucleus. It is found in the nuclear pore complex. The protein localises to the perinuclear region. Required for normal vault structure. Vaults are multi-subunit structures that may act as scaffolds for proteins involved in signal transduction. Vaults may also play a role in nucleo-cytoplasmic transport. Down-regulates IFNG-mediated STAT1 signaling and subsequent activation of JAK. Down-regulates SRC activity and signaling through MAP kinases. This chain is Major vault protein (MVP), found in Homo sapiens (Human).